The following is a 130-amino-acid chain: Guanyl-specific ribonuclease T1 (130 aa).

The N-terminal stretch at 1–26 (MMYSKLLTLTTLLLPTALALPSLVER) is a signal peptide. Intrachain disulfides connect Cys28-Cys36 and Cys32-Cys129. The active site involves His66. The active-site Proton acceptor is Glu84. His118 functions as the Proton donor in the catalytic mechanism.

It belongs to the ribonuclease N1/T1 family. Monomer.

It carries out the reaction [RNA] containing guanosine + H2O = an [RNA fragment]-3'-guanosine-3'-phosphate + a 5'-hydroxy-ribonucleotide-3'-[RNA fragment].. In Aspergillus oryzae (strain ATCC 42149 / RIB 40) (Yellow koji mold), this protein is Guanyl-specific ribonuclease T1 (rntA).